Here is a 303-residue protein sequence, read N- to C-terminus: Hemolysin C (303 aa).

CBS domains are found at residues 81-143 (MVPR…NSPL) and 146-203 (LIRK…IDDE).

It belongs to the UPF0053 family. Hemolysin C subfamily.

The polypeptide is Hemolysin C (tlyC) (Rickettsia prowazekii (strain Madrid E)).